The sequence spans 222 residues: UPF0173 metal-dependent hydrolase Kcr_0055 (222 aa).

It belongs to the UPF0173 family.

In Korarchaeum cryptofilum (strain OPF8), this protein is UPF0173 metal-dependent hydrolase Kcr_0055.